A 129-amino-acid polypeptide reads, in one-letter code: Large ribosomal subunit protein bL20 (129 aa).

The segment covering 1-17 (MARVKRSVNAHKKRRSV) has biased composition (basic residues). The disordered stretch occupies residues 1 to 29 (MARVKRSVNAHKKRRSVLKASKGYRGQRS).

This sequence belongs to the bacterial ribosomal protein bL20 family.

In terms of biological role, binds directly to 23S ribosomal RNA and is necessary for the in vitro assembly process of the 50S ribosomal subunit. It is not involved in the protein synthesizing functions of that subunit. This is Large ribosomal subunit protein bL20 from Mycobacterium ulcerans (strain Agy99).